A 618-amino-acid chain; its full sequence is 1-deoxy-D-xylulose-5-phosphate synthase (618 aa).

Thiamine diphosphate contacts are provided by residues H70 and 111-113 (GHS). Residue D142 coordinates Mg(2+). Residues 143 to 144 (GS), N171, Y278, and E360 contribute to the thiamine diphosphate site. N171 contacts Mg(2+).

Belongs to the transketolase family. DXPS subfamily. As to quaternary structure, homodimer. Requires Mg(2+) as cofactor. Thiamine diphosphate is required as a cofactor.

It catalyses the reaction D-glyceraldehyde 3-phosphate + pyruvate + H(+) = 1-deoxy-D-xylulose 5-phosphate + CO2. Its pathway is metabolic intermediate biosynthesis; 1-deoxy-D-xylulose 5-phosphate biosynthesis; 1-deoxy-D-xylulose 5-phosphate from D-glyceraldehyde 3-phosphate and pyruvate: step 1/1. Functionally, catalyzes the acyloin condensation reaction between C atoms 2 and 3 of pyruvate and glyceraldehyde 3-phosphate to yield 1-deoxy-D-xylulose-5-phosphate (DXP). The chain is 1-deoxy-D-xylulose-5-phosphate synthase from Helicobacter pylori (strain HPAG1).